Consider the following 117-residue polypeptide: Hydrogenase maturation factor HypA (117 aa).

Position 2 (H2) interacts with Ni(2+). Zn(2+) is bound by residues C73, C76, C92, and C95.

This sequence belongs to the HypA/HybF family.

In terms of biological role, involved in the maturation of [NiFe] hydrogenases. Required for nickel insertion into the metal center of the hydrogenase. The chain is Hydrogenase maturation factor HypA from Solidesulfovibrio magneticus (strain ATCC 700980 / DSM 13731 / RS-1) (Desulfovibrio magneticus).